A 417-amino-acid chain; its full sequence is Probable diacetyl reductase [(R)-acetoin forming] 2 (417 aa).

Residue Cys39 coordinates Zn(2+). Ser63 bears the Phosphoserine mark. 5 residues coordinate Zn(2+): His64, Cys120, Cys123, Cys131, and Gln173. The segment at 380-417 is disordered; it reads GELNREADNEKKEISELSSRKDQERLRESINEAKLRHT. A compositionally biased stretch (basic and acidic residues) spans 381–417; it reads ELNREADNEKKEISELSSRKDQERLRESINEAKLRHT.

This sequence belongs to the zinc-containing alcohol dehydrogenase family. Zn(2+) is required as a cofactor.

The protein resides in the cytoplasm. The protein localises to the nucleus. It catalyses the reaction (R)-acetoin + NAD(+) = diacetyl + NADH + H(+). Functionally, catalyzes the irreversible reduction of 2,3-butanediol to (S)-acetoin in the presence of NADH. The chain is Probable diacetyl reductase [(R)-acetoin forming] 2 (BDH2) from Saccharomyces cerevisiae (strain ATCC 204508 / S288c) (Baker's yeast).